The primary structure comprises 208 residues: Small ribosomal subunit protein uS9c (208 aa).

Residues 1-52 (MASITNLASSLSSLSFSSQVSQRPNTISFPRANSVFALPAKSARRASLSITA) constitute a chloroplast transit peptide.

Belongs to the universal ribosomal protein uS9 family.

Its subcellular location is the plastid. The protein localises to the chloroplast. Binds directly to 16S ribosomal RNA. This chain is Small ribosomal subunit protein uS9c (RPS9), found in Arabidopsis thaliana (Mouse-ear cress).